Reading from the N-terminus, the 396-residue chain is Mevalonate kinase (396 aa).

ATP contacts are provided by residues Lys-13, Asn-55, Ser-135, and 140–146 (GAGLGSS). Catalysis depends on Ser-146, which acts as the Proton donor. Residues Ser-146 and Glu-193 each coordinate Mg(2+). Asp-204 (proton acceptor) is an active-site residue.

Belongs to the GHMP kinase family. Mevalonate kinase subfamily. As to quaternary structure, homodimer. Mg(2+) is required as a cofactor.

It is found in the cytoplasm. The protein localises to the peroxisome. The catalysed reaction is (R)-mevalonate + ATP = (R)-5-phosphomevalonate + ADP + H(+). It participates in isoprenoid biosynthesis; isopentenyl diphosphate biosynthesis via mevalonate pathway; isopentenyl diphosphate from (R)-mevalonate: step 1/3. Its activity is regulated as follows. Farnesyl pyrophosphate and geranyl pyrophosphate inhibit mevalonate kinase activity by binding competitively at the ATP-binding sites. Functionally, catalyzes the phosphorylation of mevalonate to mevalonate 5-phosphate, a key step in isoprenoid and cholesterol biosynthesis. This chain is Mevalonate kinase, found in Bos taurus (Bovine).